The following is a 127-amino-acid chain: Group 3 truncated hemoglobin ctb (127 aa).

Heme is bound by residues Tyr-64 and His-72.

This sequence belongs to the truncated hemoglobin family. Group III subfamily. In terms of assembly, monomer. Requires heme as cofactor.

Its subcellular location is the cytoplasm. Has been suggested to be involved in cytochrome c peroxidase or P450-like oxygen chemistry or cyanide detoxification. The high oxygen affinity of this protein suggests that it probably does not function as an oxygen transporter. This chain is Group 3 truncated hemoglobin ctb (ctb), found in Campylobacter jejuni subsp. jejuni serotype O:2 (strain ATCC 700819 / NCTC 11168).